We begin with the raw amino-acid sequence, 311 residues long: tRNA dimethylallyltransferase (311 aa).

ATP is bound at residue 11 to 18; it reads GPTASGKS. Position 13–18 (13–18) interacts with substrate; the sequence is TASGKS. 2 interaction with substrate tRNA regions span residues 36–39 and 160–164; these read DSMQ and QRLIR.

The protein belongs to the IPP transferase family. Monomer. Mg(2+) serves as cofactor.

It carries out the reaction adenosine(37) in tRNA + dimethylallyl diphosphate = N(6)-dimethylallyladenosine(37) in tRNA + diphosphate. In terms of biological role, catalyzes the transfer of a dimethylallyl group onto the adenine at position 37 in tRNAs that read codons beginning with uridine, leading to the formation of N6-(dimethylallyl)adenosine (i(6)A). This is tRNA dimethylallyltransferase from Rickettsia prowazekii (strain Madrid E).